A 344-amino-acid chain; its full sequence is Geranylgeranyl transferase type-2 subunit alpha (344 aa).

6 PFTA repeats span residues 44–78 (YSEGNLKLTTELLDWNPETYSVWNYRREILLNDVF), 89–123 (LLDNELKYVLSKMKVFPKVYWIFNHRRWCLENAPY), 125–159 (NWNYEMMITEKLLSADARNFHGWHYRRYVVSQIER), 165–199 (LAKKEMEYTTSAIATNFSNFSALHNRTKLIETILN), 214–248 (ILEQELDMIHQAVFTDPDDSSVWIYHRWLMGHCNP), and 266–293 (YLQKEIELIQELHEMEPENRWCCESLVN).

This sequence belongs to the protein prenyltransferase subunit alpha family. Heterodimer of an alpha and a beta subunit.

It carries out the reaction geranylgeranyl diphosphate + L-cysteinyl-[protein] = S-geranylgeranyl-L-cysteinyl-[protein] + diphosphate. In terms of biological role, catalyzes the transfer of a geranyl-geranyl moiety from geranyl-geranyl pyrophosphate to proteins having the C-terminal-XCC or -XCXC, where both cysteines may become modified. In Schizosaccharomyces pombe (strain 972 / ATCC 24843) (Fission yeast), this protein is Geranylgeranyl transferase type-2 subunit alpha (bet4).